A 40-amino-acid polypeptide reads, in one-letter code: WCSTCLDLACGASRECYDPCFKAFGRAHGKCMNNKCRCYT.

4 disulfide bridges follow: Cys2/Cys5, Cys10/Cys31, Cys16/Cys36, and Cys20/Cys38.

It belongs to the short scorpion toxin superfamily. Potassium channel inhibitor family. Alpha-KTx 12 subfamily. As to expression, expressed by the venom gland.

The protein resides in the secreted. In terms of biological role, inhibits high conductance calcium-activated potassium channels. Reversibly inhibits Shaker B potassium channels. The protein is Potassium channel toxin alpha-KTx 12.2 of Tityus trivittatus (Argentinean scorpion).